Reading from the N-terminus, the 258-residue chain is 3-deoxy-manno-octulosonate cytidylyltransferase (258 aa).

The protein belongs to the KdsB family.

The protein localises to the cytoplasm. It carries out the reaction 3-deoxy-alpha-D-manno-oct-2-ulosonate + CTP = CMP-3-deoxy-beta-D-manno-octulosonate + diphosphate. It functions in the pathway nucleotide-sugar biosynthesis; CMP-3-deoxy-D-manno-octulosonate biosynthesis; CMP-3-deoxy-D-manno-octulosonate from 3-deoxy-D-manno-octulosonate and CTP: step 1/1. The protein operates within bacterial outer membrane biogenesis; lipopolysaccharide biosynthesis. Activates KDO (a required 8-carbon sugar) for incorporation into bacterial lipopolysaccharide in Gram-negative bacteria. This is 3-deoxy-manno-octulosonate cytidylyltransferase from Gemmatimonas aurantiaca (strain DSM 14586 / JCM 11422 / NBRC 100505 / T-27).